A 328-amino-acid chain; its full sequence is DNA-directed RNA polymerase subunit alpha (328 aa).

The interval 1 to 232 (MSTQGFLKPR…DQISVFAALE (232 aa)) is alpha N-terminal domain (alpha-NTD). Residues 248–328 (IDPVLLRPVD…NWPPLGLERP (81 aa)) are alpha C-terminal domain (alpha-CTD).

Belongs to the RNA polymerase alpha chain family. In terms of assembly, homodimer. The RNAP catalytic core consists of 2 alpha, 1 beta, 1 beta' and 1 omega subunit. When a sigma factor is associated with the core the holoenzyme is formed, which can initiate transcription.

It catalyses the reaction RNA(n) + a ribonucleoside 5'-triphosphate = RNA(n+1) + diphosphate. Functionally, DNA-dependent RNA polymerase catalyzes the transcription of DNA into RNA using the four ribonucleoside triphosphates as substrates. The protein is DNA-directed RNA polymerase subunit alpha of Bordetella bronchiseptica (strain ATCC BAA-588 / NCTC 13252 / RB50) (Alcaligenes bronchisepticus).